Here is a 478-residue protein sequence, read N- to C-terminus: MTPEDQEETQPLLRPPGGSAPRGRRVFLAAFAAALGPLSFGFALGYSSPAIPSLRRAAPPAPHLDEDAASWFGAIVTLGAAAGGVLGGWLLDRAGRKLSLVLCALPFVAGFAVITAAQNLWMLLGGRLLTGLACGIASLVAPVYISEIAYPEVRGLLGSCVQLMVVTGILLAYLAGWVLEWRWLAVLGCVPPSFMLLLMCFMPETPRFLLSQHKHQEAMAAMQFLWGYAQGWEEPPLGAQHQDFHVAQLRRPGVYKPFIIGISLMAFQQLSGVNAVMFYAETIFEEAKFKDSSLASVVVGVIQVLFTATAALIMDRAGRRLLLTLSGVVMVFSTSAFGTYFKLTEGGPSNSSHVDLPALVSMEAADTNVGLAWLAVGSMCLFIAGFAVGWGPIPWLLMSEIFPLHVKGVATGVCVLTNWFMAFLVTKEFSSLMEVLRPYGAFWLASAFCIFGVLFTLACVPETKGKTLEQITAHFEGR.

The disordered stretch occupies residues 1 to 20; it reads MTPEDQEETQPLLRPPGGSA. Over 1-25 the chain is Cytoplasmic; sequence MTPEDQEETQPLLRPPGGSAPRGRR. Residues 11–20 show a composition bias toward low complexity; sequence PLLRPPGGSA. The Dileucine internalization motif motif lies at 12 to 13; sequence LL. Residues 26–46 form a helical membrane-spanning segment; that stretch reads VFLAAFAAALGPLSFGFALGY. At 47–70 the chain is on the extracellular side; that stretch reads SSPAIPSLRRAAPPAPHLDEDAAS. The chain crosses the membrane as a helical span at residues 71–91; that stretch reads WFGAIVTLGAAAGGVLGGWLL. Topologically, residues 92–97 are cytoplasmic; that stretch reads DRAGRK. A helical membrane pass occupies residues 98 to 118; sequence LSLVLCALPFVAGFAVITAAQ. The Extracellular portion of the chain corresponds to 119–127; sequence NLWMLLGGR. The helical transmembrane segment at 128–148 threads the bilayer; the sequence is LLTGLACGIASLVAPVYISEI. Topologically, residues 149–158 are cytoplasmic; it reads AYPEVRGLLG. A helical membrane pass occupies residues 159–179; sequence SCVQLMVVTGILLAYLAGWVL. Gln-162 provides a ligand contact to D-glucose. Residues 180–182 are Extracellular-facing; sequence EWR. A helical membrane pass occupies residues 183 to 203; the sequence is WLAVLGCVPPSFMLLLMCFMP. Over 204–257 the chain is Cytoplasmic; that stretch reads ETPRFLLSQHKHQEAMAAMQFLWGYAQGWEEPPLGAQHQDFHVAQLRRPGVYKP. The helical transmembrane segment at 258-278 threads the bilayer; that stretch reads FIIGISLMAFQQLSGVNAVMF. Residues 268–269 and Asn-274 each bind D-glucose; that span reads QQ. The Extracellular portion of the chain corresponds to 279–293; sequence YAETIFEEAKFKDSS. Residues 294–314 form a helical membrane-spanning segment; it reads LASVVVGVIQVLFTATAALIM. Over 315–320 the chain is Cytoplasmic; that stretch reads DRAGRR. The chain crosses the membrane as a helical span at residues 321–341; sequence LLLTLSGVVMVFSTSAFGTYF. Topologically, residues 342–368 are extracellular; the sequence is KLTEGGPSNSSHVDLPALVSMEAADTN. Asn-350 carries an N-linked (GlcNAc...) asparagine glycan. A helical membrane pass occupies residues 369-389; the sequence is VGLAWLAVGSMCLFIAGFAVG. Residues 390 to 405 lie on the Cytoplasmic side of the membrane; it reads WGPIPWLLMSEIFPLH. Trp-395 contacts D-glucose. Residues 406–426 form a helical membrane-spanning segment; it reads VKGVATGVCVLTNWFMAFLVT. The Extracellular segment spans residues 427–439; it reads KEFSSLMEVLRPY. Residues 440-460 traverse the membrane as a helical segment; sequence GAFWLASAFCIFGVLFTLACV. At 461–478 the chain is on the cytoplasmic side; the sequence is PETKGKTLEQITAHFEGR.

The protein belongs to the major facilitator superfamily. Sugar transporter (TC 2.A.1.1) family. Glucose transporter subfamily. In terms of assembly, interacts with AP2B1. As to expression, abundantly expressed in testis and more moderately in lung, kidney, spleen, intestine, skeletal muscle, liver and mammary gland.

It localises to the cell membrane. It is found in the cytoplasmic vesicle membrane. The catalysed reaction is D-glucose(out) = D-glucose(in). It catalyses the reaction D-fructose(out) = D-fructose(in). It carries out the reaction L-dehydroascorbate(out) = L-dehydroascorbate(in). The enzyme catalyses alpha,alpha-trehalose(in) = alpha,alpha-trehalose(out). Inhibited by cytochalasin B. Its function is as follows. Insulin-regulated facilitative hexose transporter that mediates the transport of glucose and fructose. Facilitates hepatic influx of dietary trehalose, which in turn inhibits glucose and fructose influx triggering a starvation signal and hepatic autophagy through activation of AMPK and ULK1. Also able to mediate the transport of dehydroascorbate. The sequence is that of Solute carrier family 2, facilitated glucose transporter member 8 from Bos taurus (Bovine).